Consider the following 101-residue polypeptide: AFA-III adhesin operon regulatory protein (101 aa).

Functionally, regulates the transcription of genes involved in the biosynthesis of afimbrial adhesin-III. In Escherichia coli, this protein is AFA-III adhesin operon regulatory protein (afaA).